Here is a 531-residue protein sequence, read N- to C-terminus: UDP-glucuronosyltransferase 1A6 (531 aa).

Residues Met1–Gly26 form the signal peptide. A glycan (N-linked (GlcNAc...) asparagine) is linked at Asn294. Residues Val489–Phe505 form a helical membrane-spanning segment.

It belongs to the UDP-glycosyltransferase family.

Its subcellular location is the microsome. The protein resides in the endoplasmic reticulum membrane. The catalysed reaction is glucuronate acceptor + UDP-alpha-D-glucuronate = acceptor beta-D-glucuronoside + UDP + H(+). The enzyme catalyses (5Z,8Z,11Z,14Z)-eicosatetraenoate + UDP-alpha-D-glucuronate = O-[(5Z),(8Z),(11Z),(14Z)-eicosatetraenoyl]-beta-D-glucuronate + UDP. It carries out the reaction 15-hydroxy-(5Z,8Z,11Z,13E)-eicosatetraenoate + UDP-alpha-D-glucuronate = 15-O-(beta-D-glucuronosyl)-(5Z,8Z,11Z,14Z)-eicosatetraenoate + UDP + H(+). It catalyses the reaction (E)-ferulate + UDP-alpha-D-glucuronate = (E)-4-O-(beta-D-glucuronosyl)-ferulate + UDP + H(+). The catalysed reaction is (E)-ferulate + UDP-alpha-D-glucuronate = (E)-ferulic acid beta-D-glucuronate ester + UDP. Functionally, UDP-glucuronosyltransferase (UGT) that catalyzes phase II biotransformation reactions in which lipophilic substrates are conjugated with glucuronic acid to facilitate their inactivation and excretion from the body. Essential for the elimination and detoxification of drugs, xenobiotics and endogenous compounds. Involved in the glucuronidation of arachidonic acid (AA) and AA-derived eicosanoids including 15-HETE and 20-HETE. Conjugates small planar phenolic molecules such as 4-nitrophenol, 1-naphthol, and 4-methylumbelliferone. The bulky phenol 4-hydroxybiphenyl, androgens and estrogens are not substrates. 2-hydroxybiphenyl is an excellent substrate. Involved in the glucuronidation of the phytochemical ferulic acid at the phenolic or the carboxylic acid group. The polypeptide is UDP-glucuronosyltransferase 1A6 (UGT1) (Oryctolagus cuniculus (Rabbit)).